The primary structure comprises 128 residues: Holo-[acyl-carrier-protein] synthase (128 aa).

2 residues coordinate Mg(2+): D8 and E60.

Belongs to the P-Pant transferase superfamily. AcpS family. The cofactor is Mg(2+).

The protein resides in the cytoplasm. It carries out the reaction apo-[ACP] + CoA = holo-[ACP] + adenosine 3',5'-bisphosphate + H(+). Functionally, transfers the 4'-phosphopantetheine moiety from coenzyme A to a Ser of acyl-carrier-protein. The chain is Holo-[acyl-carrier-protein] synthase from Anaeromyxobacter dehalogenans (strain 2CP-1 / ATCC BAA-258).